Reading from the N-terminus, the 690-residue chain is ATP-dependent DNA helicase Hel308 (690 aa).

ATP is bound by residues Q26 and 45 to 52 (IPTASGKT). The Helicase ATP-binding domain occupies 32–188 (AGYLESEDNY…WLDARVVEHD (157 aa)). Residues 133–136 (DEFH) carry the DEAH box motif. One can recognise a Helicase C-terminal domain in the interval 208–417 (EKNDVVLKVL…NRDALYRQII (210 aa)).

It belongs to the helicase family. Hel308 subfamily. Monomer. Binds replication protein A (RPA), in presence and absence of DNA.

The enzyme catalyses Couples ATP hydrolysis with the unwinding of duplex DNA by translocating in the 3'-5' direction.. It carries out the reaction ATP + H2O = ADP + phosphate + H(+). Functionally, DNA-dependent ATPase and 3'-5' DNA helicase that may be involved in repair of stalled replication forks. Helicase with 3'-to 5'- polarity; able to unwind over 100 bp of DNA at 50 degrees Celsius. Unwinds forked DNA, preferentially on lagging strand forks; has weaker activity on Holliday junctions. Displaces the invading strand in DNA D-loops. Unwinds short oligonucleotides from dsDNA with 3'- but not blunt ends or 5'-ssDNA tails in an ATP-dependent manner. ATPase activity is stimulated by ssDNA but not dsDNA, protein binds ssDNA, dsDNA with 5'- or 3'-overhangs but not blunt ended dsDNA and replication forks. Replication forks bind both this protein and RPA. RPA does not stimulate the helicase activity of this protein. The chain is ATP-dependent DNA helicase Hel308 from Methanothermobacter thermautotrophicus (strain ATCC 29096 / DSM 1053 / JCM 10044 / NBRC 100330 / Delta H) (Methanobacterium thermoautotrophicum).